Reading from the N-terminus, the 2200-residue chain is Tyrosine-protein phosphatase Lar-like (2200 aa).

The N-terminal stretch at 1-42 (MIQFRNKNNSMNRIARHLRNVARRKGSSLLLFLMLSTVLVAA) is a signal peptide. N-linked (GlcNAc...) asparagine glycans are attached at residues N8 and N116. Topologically, residues 43 to 1497 (KEDDPARLVV…LRGASQKSSP (1455 aa)) are extracellular. Ig-like C2-type domains are found at residues 47–139 (PARL…ASLT), 151–240 (PQIE…KAAN), and 250–334 (PYFS…TTVI). Cystine bridges form between C69–C122 and C172–C225. N-linked (GlcNAc...) asparagine glycosylation is found at N269 and N315. A disulfide bridge connects residues C272 and C318. 9 consecutive Fibronectin type-III domains span residues 341-434 (PPVN…TKPS), 439-535 (APVS…TRQG), 539-628 (QPPM…TIAS), 633-748 (SPTI…TLED), 752-856 (APRN…IPPE), 857-956 (APEI…PVGS), 957-1053 (PDGE…PDPA), 1058-1158 (PPTN…NYMT), and 1181-1287 (MVQN…TGPP). N574 carries N-linked (GlcNAc...) asparagine glycosylation. N-linked (GlcNAc...) asparagine glycosylation is found at N945, N988, N1069, N1141, N1212, and N1330. The disordered stretch occupies residues 1355–1392 (LARSLSVSPSKKLKRKASEVGDDSQSASYHPKEKRARR). A helical membrane pass occupies residues 1498–1518 (WVGACIAFLVLFSIVGMLICW). The Cytoplasmic segment spans residues 1519 to 2200 (WLRCNKKSAG…EYLAAYDNFS (682 aa)). 2 consecutive Tyrosine-protein phosphatase domains span residues 1647–1902 (FQSE…VLDA) and 1933–2192 (IDME…AYEY). Substrate contacts are provided by residues D1811, 1843-1849 (CSAGIGR), and Q1887. The Phosphocysteine intermediate role is filled by C1843. C2133 functions as the Phosphocysteine intermediate in the catalytic mechanism.

It belongs to the protein-tyrosine phosphatase family. Receptor class 2A subfamily. As to expression, both isoforms are ubiquitously expressed in early embryos. In later embryos, larvae and adults expression is highest in the nerve ring, dorsal cord, ventral cord and epithelial tissues.

The protein resides in the cell junction. Its subcellular location is the adherens junction. It is found in the cell membrane. It carries out the reaction O-phospho-L-tyrosyl-[protein] + H2O = L-tyrosyl-[protein] + phosphate. Its function is as follows. Has a role in early neural and epidermal development; neuroblast movements during closure of the gastrulation cleft and epidermal morphogenesis. Vab-1 and ptp-3 may function redundantly within the same sets of neuronal precursors. The sequence is that of Tyrosine-protein phosphatase Lar-like (ptp-3) from Caenorhabditis elegans.